The chain runs to 321 residues: Small ribosomal subunit biogenesis GTPase RsgA (321 aa).

One can recognise a CP-type G domain in the interval 89–248; the sequence is QSWINRPPVA…VADTPGFNRP (160 aa). GTP is bound by residues 138–141 and 190–198; these read TKRD and GPSGVGKTS. Zn(2+) contacts are provided by Cys-273, Cys-278, His-280, and Cys-286.

Belongs to the TRAFAC class YlqF/YawG GTPase family. RsgA subfamily. Monomer. Associates with 30S ribosomal subunit, binds 16S rRNA. It depends on Zn(2+) as a cofactor.

The protein resides in the cytoplasm. Its function is as follows. One of several proteins that assist in the late maturation steps of the functional core of the 30S ribosomal subunit. Helps release RbfA from mature subunits. May play a role in the assembly of ribosomal proteins into the subunit. Circularly permuted GTPase that catalyzes slow GTP hydrolysis, GTPase activity is stimulated by the 30S ribosomal subunit. The polypeptide is Small ribosomal subunit biogenesis GTPase RsgA (Prochlorococcus marinus (strain MIT 9313)).